Reading from the N-terminus, the 449-residue chain is Phosphoglucosamine mutase (449 aa).

Ser100 (phosphoserine intermediate) is an active-site residue. Ser100, Asp241, Asp243, and Asp245 together coordinate Mg(2+). Ser100 is modified (phosphoserine).

This sequence belongs to the phosphohexose mutase family. It depends on Mg(2+) as a cofactor. Activated by phosphorylation.

It catalyses the reaction alpha-D-glucosamine 1-phosphate = D-glucosamine 6-phosphate. Its function is as follows. Catalyzes the conversion of glucosamine-6-phosphate to glucosamine-1-phosphate. The chain is Phosphoglucosamine mutase from Geobacillus kaustophilus (strain HTA426).